Consider the following 314-residue polypeptide: Ribosomal RNA small subunit methyltransferase H (314 aa).

Residues 36-38 (GGH), D56, F82, D104, and Q111 contribute to the S-adenosyl-L-methionine site.

Belongs to the methyltransferase superfamily. RsmH family.

Its subcellular location is the cytoplasm. The catalysed reaction is cytidine(1402) in 16S rRNA + S-adenosyl-L-methionine = N(4)-methylcytidine(1402) in 16S rRNA + S-adenosyl-L-homocysteine + H(+). Its function is as follows. Specifically methylates the N4 position of cytidine in position 1402 (C1402) of 16S rRNA. This Ectopseudomonas mendocina (strain ymp) (Pseudomonas mendocina) protein is Ribosomal RNA small subunit methyltransferase H.